A 310-amino-acid chain; its full sequence is MPDHPLSSGVAFSHVPVLAETLMQVLSEQPPILWQNTAVIDATLGGGGHSKLILERFPGVRLVGLDQDPSARAAAASRLEPFLDRVQIVPVNFAAFEPPEPVSLVLADLGVSSPQLDVASRGFSFRLDGPLDMRMNPVAGGETAEEMIARLDVNALADLIYAFGEERLSRRIARRIKADLEAEGAYAGTAALAYAVAGCYPPKARRGRIHPATRTFQALRIAVNDELGVLDRLLQTAPGWLKPGGVLAIISFHSLEDRRVKTAFLQEERLERVTRKPFMASEQEQADNPRSRSAKLRIARRRPDTARSGP.

Residues 47 to 49 (GGH), Asp66, Phe93, Asp108, and Gln115 each bind S-adenosyl-L-methionine. Positions 275-310 (RKPFMASEQEQADNPRSRSAKLRIARRRPDTARSGP) are disordered. The span at 301-310 (RRPDTARSGP) shows a compositional bias: basic and acidic residues.

Belongs to the methyltransferase superfamily. RsmH family.

It is found in the cytoplasm. It catalyses the reaction cytidine(1402) in 16S rRNA + S-adenosyl-L-methionine = N(4)-methylcytidine(1402) in 16S rRNA + S-adenosyl-L-homocysteine + H(+). In terms of biological role, specifically methylates the N4 position of cytidine in position 1402 (C1402) of 16S rRNA. This is Ribosomal RNA small subunit methyltransferase H from Synechococcus sp. (strain CC9311).